The following is a 127-amino-acid chain: Probable tautomerase YusQ (127 aa).

The active-site Proton acceptor; via imino nitrogen is Pro2.

Belongs to the 4-oxalocrotonate tautomerase family.

This is Probable tautomerase YusQ (yusQ) from Bacillus subtilis (strain 168).